The sequence spans 101 residues: Urease subunit beta (101 aa).

Belongs to the urease beta subunit family. As to quaternary structure, heterotrimer of UreA (gamma), UreB (beta) and UreC (alpha) subunits. Three heterotrimers associate to form the active enzyme.

It localises to the cytoplasm. It carries out the reaction urea + 2 H2O + H(+) = hydrogencarbonate + 2 NH4(+). It functions in the pathway nitrogen metabolism; urea degradation; CO(2) and NH(3) from urea (urease route): step 1/1. This is Urease subunit beta from Dechloromonas aromatica (strain RCB).